The following is a 241-amino-acid chain: Uridylate kinase (241 aa).

ATP is bound at residue 14–17; that stretch reads KLSG. G56 is a UMP binding site. ATP contacts are provided by G57 and R61. Residues D77 and 138–145 each bind UMP; that span reads TGNPFFTT. T165, Y171, and D174 together coordinate ATP.

It belongs to the UMP kinase family. As to quaternary structure, homohexamer.

It is found in the cytoplasm. The catalysed reaction is UMP + ATP = UDP + ADP. It functions in the pathway pyrimidine metabolism; CTP biosynthesis via de novo pathway; UDP from UMP (UMPK route): step 1/1. Its activity is regulated as follows. Inhibited by UTP. In terms of biological role, catalyzes the reversible phosphorylation of UMP to UDP. This Psychrobacter arcticus (strain DSM 17307 / VKM B-2377 / 273-4) protein is Uridylate kinase.